Reading from the N-terminus, the 616-residue chain is Protein cereblon (616 aa).

Disordered regions lie at residues 1–39 (MDEEETAEINAQEQEVAGSAGEAAAGPSGAEVQPNDDSV), 63–137 (FGPS…AMPR), and 182–220 (SQERRRSRNSDEVSPEAEDDELPEHPPPPPPRPPIDIDM). The span at 11–32 (AQEQEVAGSAGEAAAGPSGAEV) shows a compositional bias: low complexity. Residues 96-107 (SEEDIVLDDGTE) show a composition bias toward acidic residues. The segment covering 183–192 (QERRRSRNSD) has biased composition (basic and acidic residues). Acidic residues predominate over residues 194-203 (VSPEAEDDEL). A compositionally biased stretch (pro residues) spans 206 to 215 (HPPPPPPRPP). Positions 257–482 (HMLIFLHQYI…LIGGILKEET (226 aa)) constitute a Lon N-terminal domain. One can recognise a CULT domain in the interval 481–590 (ETLFYCRYCN…LAGSSVRIGK (110 aa)). Cys486, Cys489, Cys555, and Cys558 together coordinate Zn(2+).

It belongs to the CRBN family. As to quaternary structure, likely a component of a DCX (DDB1-CUL4-X-box) protein ligase complex. May interact with pic/DDB1. Post-translationally, ubiquitinated.

The protein resides in the nucleus. It functions in the pathway protein modification; protein ubiquitination. In terms of biological role, substrate recognition component of a DCX (DDB1-CUL4-X-box) E3 protein ligase complex that mediates the ubiquitination and subsequent proteasomal degradation of target proteins. Has an essential role in mediating growth by negatively regulating insulin signaling. It also has a role in maintaining presynaptic function in the neuromuscular junction synapses of third-instar larvae. The polypeptide is Protein cereblon (Drosophila pseudoobscura pseudoobscura (Fruit fly)).